A 381-amino-acid chain; its full sequence is Succinyl-diaminopimelate desuccinylase (381 aa).

His-72 is a binding site for Zn(2+). Asp-74 is an active-site residue. Asp-105 lines the Zn(2+) pocket. The Proton acceptor role is filled by Glu-139. Positions 140, 168, and 354 each coordinate Zn(2+).

The protein belongs to the peptidase M20A family. DapE subfamily. Homodimer. Zn(2+) is required as a cofactor. It depends on Co(2+) as a cofactor.

It carries out the reaction N-succinyl-(2S,6S)-2,6-diaminopimelate + H2O = (2S,6S)-2,6-diaminopimelate + succinate. It functions in the pathway amino-acid biosynthesis; L-lysine biosynthesis via DAP pathway; LL-2,6-diaminopimelate from (S)-tetrahydrodipicolinate (succinylase route): step 3/3. Catalyzes the hydrolysis of N-succinyl-L,L-diaminopimelic acid (SDAP), forming succinate and LL-2,6-diaminopimelate (DAP), an intermediate involved in the bacterial biosynthesis of lysine and meso-diaminopimelic acid, an essential component of bacterial cell walls. The sequence is that of Succinyl-diaminopimelate desuccinylase from Shewanella sp. (strain MR-4).